A 671-amino-acid chain; its full sequence is DNA ligase (671 aa).

NAD(+) is bound by residues 32-36 (DAEYD), 81-82 (SL), and E113. K115 (N6-AMP-lysine intermediate) is an active-site residue. NAD(+) is bound by residues R136, E173, K290, and K314. 4 residues coordinate Zn(2+): C408, C411, C426, and C432. Residues 593–671 (EIDSPFAGKT…ETEMLRLLGS (79 aa)) enclose the BRCT domain.

It belongs to the NAD-dependent DNA ligase family. LigA subfamily. Mg(2+) serves as cofactor. Requires Mn(2+) as cofactor.

It catalyses the reaction NAD(+) + (deoxyribonucleotide)n-3'-hydroxyl + 5'-phospho-(deoxyribonucleotide)m = (deoxyribonucleotide)n+m + AMP + beta-nicotinamide D-nucleotide.. In terms of biological role, DNA ligase that catalyzes the formation of phosphodiester linkages between 5'-phosphoryl and 3'-hydroxyl groups in double-stranded DNA using NAD as a coenzyme and as the energy source for the reaction. It is essential for DNA replication and repair of damaged DNA. The protein is DNA ligase of Escherichia coli O1:K1 / APEC.